The chain runs to 556 residues: Dihydroxy-acid dehydratase (556 aa).

Cys47 lines the [2Fe-2S] cluster pocket. A Mg(2+)-binding site is contributed by Asp79. Cys120 provides a ligand contact to [2Fe-2S] cluster. 2 residues coordinate Mg(2+): Asp121 and Lys122. An N6-carboxylysine modification is found at Lys122. Cys192 serves as a coordination point for [2Fe-2S] cluster. Glu444 is a Mg(2+) binding site. Catalysis depends on Ser470, which acts as the Proton acceptor.

Belongs to the IlvD/Edd family. Homodimer. Requires [2Fe-2S] cluster as cofactor. The cofactor is Mg(2+).

The enzyme catalyses (2R)-2,3-dihydroxy-3-methylbutanoate = 3-methyl-2-oxobutanoate + H2O. The catalysed reaction is (2R,3R)-2,3-dihydroxy-3-methylpentanoate = (S)-3-methyl-2-oxopentanoate + H2O. Its pathway is amino-acid biosynthesis; L-isoleucine biosynthesis; L-isoleucine from 2-oxobutanoate: step 3/4. The protein operates within amino-acid biosynthesis; L-valine biosynthesis; L-valine from pyruvate: step 3/4. Functionally, functions in the biosynthesis of branched-chain amino acids. Catalyzes the dehydration of (2R,3R)-2,3-dihydroxy-3-methylpentanoate (2,3-dihydroxy-3-methylvalerate) into 2-oxo-3-methylpentanoate (2-oxo-3-methylvalerate) and of (2R)-2,3-dihydroxy-3-methylbutanoate (2,3-dihydroxyisovalerate) into 2-oxo-3-methylbutanoate (2-oxoisovalerate), the penultimate precursor to L-isoleucine and L-valine, respectively. The polypeptide is Dihydroxy-acid dehydratase (Prochlorococcus marinus (strain NATL2A)).